The following is a 154-amino-acid chain: Crossover junction endodeoxyribonuclease RuvC (154 aa).

Residues Asp7, Glu67, and Asp139 contribute to the active site. The Mg(2+) site is built by Asp7, Glu67, and Asp139.

It belongs to the RuvC family. In terms of assembly, homodimer which binds Holliday junction (HJ) DNA. The HJ becomes 2-fold symmetrical on binding to RuvC with unstacked arms; it has a different conformation from HJ DNA in complex with RuvA. In the full resolvosome a probable DNA-RuvA(4)-RuvB(12)-RuvC(2) complex forms which resolves the HJ. Requires Mg(2+) as cofactor.

It localises to the cytoplasm. It carries out the reaction Endonucleolytic cleavage at a junction such as a reciprocal single-stranded crossover between two homologous DNA duplexes (Holliday junction).. Functionally, the RuvA-RuvB-RuvC complex processes Holliday junction (HJ) DNA during genetic recombination and DNA repair. Endonuclease that resolves HJ intermediates. Cleaves cruciform DNA by making single-stranded nicks across the HJ at symmetrical positions within the homologous arms, yielding a 5'-phosphate and a 3'-hydroxyl group; requires a central core of homology in the junction. The consensus cleavage sequence is 5'-(A/T)TT(C/G)-3'. Cleavage occurs on the 3'-side of the TT dinucleotide at the point of strand exchange. HJ branch migration catalyzed by RuvA-RuvB allows RuvC to scan DNA until it finds its consensus sequence, where it cleaves and resolves the cruciform DNA. The sequence is that of Crossover junction endodeoxyribonuclease RuvC from Parasynechococcus marenigrum (strain WH8102).